Here is a 280-residue protein sequence, read N- to C-terminus: Succinate dehydrogenase [ubiquinone] iron-sulfur subunit, mitochondrial (280 aa).

The transit peptide at 1-28 directs the protein to the mitochondrion; the sequence is MAAVVALSLRRRLPATTLGGACLQASRG. A 2Fe-2S ferredoxin-type domain is found at 40–133; it reads KKFAIYRWDP…VSKIYPLPHM (94 aa). N6-acetyllysine occurs at positions 51 and 55. [2Fe-2S] cluster-binding residues include C93, C98, C101, and C113. The segment at 146–218 is interaction with SDHAF1; the sequence is FYAQYKSIEP…PAVLMQAYRW (73 aa). In terms of domain architecture, 4Fe-4S ferredoxin-type spans 176-206; that stretch reads EREKLDGLYECILCACCSTSCPSYWWNGDKY. Residues C186, C189, and C192 each contribute to the [4Fe-4S] cluster site. C196 lines the [3Fe-4S] cluster pocket. W201 contacts a ubiquinone. [3Fe-4S] cluster is bound by residues C243 and C249. C253 provides a ligand contact to [4Fe-4S] cluster.

The protein belongs to the succinate dehydrogenase/fumarate reductase iron-sulfur protein family. In terms of assembly, component of complex II composed of four subunits: the flavoprotein (FP) SDHA, iron-sulfur protein (IP) SDHB, and a cytochrome b560 composed of SDHC and SDHD. Interacts with SDHAF1; the interaction is required for iron-sulfur cluster incorporation into SDHB. (Microbial infection) Interacts with JC virus small t antigen. [2Fe-2S] cluster serves as cofactor. Requires [3Fe-4S] cluster as cofactor. The cofactor is [4Fe-4S] cluster.

The protein localises to the mitochondrion inner membrane. It carries out the reaction a quinone + succinate = fumarate + a quinol. The enzyme catalyses (R)-malate + a quinone = enol-oxaloacetate + a quinol. It catalyses the reaction (S)-malate + a quinone = enol-oxaloacetate + a quinol. It functions in the pathway carbohydrate metabolism; tricarboxylic acid cycle; fumarate from succinate (eukaryal route): step 1/1. Enol-oxaloacetate inhibits the succinate dehydrogenase activity. In terms of biological role, iron-sulfur protein (IP) subunit of the succinate dehydrogenase complex (mitochondrial respiratory chain complex II), responsible for transferring electrons from succinate to ubiquinone (coenzyme Q). SDH also oxidizes malate to the non-canonical enol form of oxaloacetate, enol-oxaloacetate. Enol-oxaloacetate, which is a potent inhibitor of the succinate dehydrogenase activity, is further isomerized into keto-oxaloacetate. The chain is Succinate dehydrogenase [ubiquinone] iron-sulfur subunit, mitochondrial (SDHB) from Homo sapiens (Human).